The primary structure comprises 161 residues: MEYNTSELCDMYIDVVDVVEPMFSNYGGCSSFGGAISTVKCFEDNGLIADALQEDGEGKVLLVDGGGSLRRALIDASIAQIAVNNNWEGIIVYGSVRDVDALEELDLGIQALASIPVGAEGNGVGEIELPVNFGGVTFLPGDHIYADNTGVILSPEPLDID.

Belongs to the RraA family. In terms of assembly, homotrimer. Binds to both RNA-binding sites in the C-terminal region of Rne and to RhlB.

The protein localises to the cytoplasm. Globally modulates RNA abundance by binding to RNase E (Rne) and regulating its endonucleolytic activity. Can modulate Rne action in a substrate-dependent manner by altering the composition of the degradosome. Modulates RNA-binding and helicase activities of the degradosome. The chain is Regulator of ribonuclease activity A from Shewanella denitrificans (strain OS217 / ATCC BAA-1090 / DSM 15013).